The sequence spans 281 residues: 33 kDa chaperonin (281 aa).

Disulfide bonds link cysteine 229-cysteine 231 and cysteine 262-cysteine 265.

This sequence belongs to the HSP33 family. Post-translationally, under oxidizing conditions two disulfide bonds are formed involving the reactive cysteines. Under reducing conditions zinc is bound to the reactive cysteines and the protein is inactive.

Its subcellular location is the cytoplasm. Functionally, redox regulated molecular chaperone. Protects both thermally unfolding and oxidatively damaged proteins from irreversible aggregation. Plays an important role in the bacterial defense system toward oxidative stress. The protein is 33 kDa chaperonin of Pseudoalteromonas translucida (strain TAC 125).